The following is a 354-amino-acid chain: Protein-glutamate methylesterase/protein-glutamine glutaminase 2 (354 aa).

In terms of domain architecture, Response regulatory spans Arg-5–Glu-122. Asp-56 carries the post-translational modification 4-aspartylphosphate. Residues Pro-159–Arg-354 form the CheB-type methylesterase domain. Catalysis depends on residues Ser-172, His-199, and Asp-298.

Belongs to the CheB family. In terms of processing, phosphorylated by CheA. Phosphorylation of the N-terminal regulatory domain activates the methylesterase activity.

The protein localises to the cytoplasm. The catalysed reaction is [protein]-L-glutamate 5-O-methyl ester + H2O = L-glutamyl-[protein] + methanol + H(+). It carries out the reaction L-glutaminyl-[protein] + H2O = L-glutamyl-[protein] + NH4(+). Involved in chemotaxis. Part of a chemotaxis signal transduction system that modulates chemotaxis in response to various stimuli. Catalyzes the demethylation of specific methylglutamate residues introduced into the chemoreceptors (methyl-accepting chemotaxis proteins or MCP) by CheR. Also mediates the irreversible deamidation of specific glutamine residues to glutamic acid. The chain is Protein-glutamate methylesterase/protein-glutamine glutaminase 2 from Carboxydothermus hydrogenoformans (strain ATCC BAA-161 / DSM 6008 / Z-2901).